A 401-amino-acid polypeptide reads, in one-letter code: Beta-ketoadipyl-CoA thiolase (401 aa).

Catalysis depends on cysteine 90, which acts as the Acyl-thioester intermediate. Residues histidine 357 and cysteine 387 each act as proton acceptor in the active site.

The protein belongs to the thiolase-like superfamily. Thiolase family.

The catalysed reaction is succinyl-CoA + acetyl-CoA = 3-oxoadipyl-CoA + CoA. It participates in aromatic compound metabolism; phenylacetate degradation. Functionally, catalyzes thiolytic cleavage of beta-ketoadipyl-CoA to succinyl-CoA and acetyl-CoA. The sequence is that of Beta-ketoadipyl-CoA thiolase (paaJ) from Escherichia coli.